The following is a 159-amino-acid chain: MTQLTHINTAGEAHMVDVSAKNETAREARAEAFVDMQAATLAMIIDGSHHKGDVFATARIAGIQAAKKTWELIPLCHPLLLTKVEVKLEAQPEHNRVRIETCCRLTGKTGVEMEALTAASVAALTIYDMCKAVQKDMIIGPVRLLTKSGGKSGDFKVDI.

Substrate-binding positions include 75 to 77 (LCH) and 113 to 114 (ME). The active site involves aspartate 128.

The protein belongs to the MoaC family. Homohexamer; trimer of dimers.

It catalyses the reaction (8S)-3',8-cyclo-7,8-dihydroguanosine 5'-triphosphate = cyclic pyranopterin phosphate + diphosphate. It functions in the pathway cofactor biosynthesis; molybdopterin biosynthesis. Its function is as follows. Catalyzes the conversion of (8S)-3',8-cyclo-7,8-dihydroguanosine 5'-triphosphate to cyclic pyranopterin monophosphate (cPMP). The chain is Cyclic pyranopterin monophosphate synthase from Yersinia pseudotuberculosis serotype O:3 (strain YPIII).